The chain runs to 276 residues: Elongation factor Ts, mitochondrial (276 aa).

This sequence belongs to the EF-Ts family.

The protein localises to the mitochondrion. Functionally, associates with the EF-Tu.GDP complex and induces the exchange of GDP to GTP. It remains bound to the aminoacyl-tRNA.EF-Tu.GTP complex up to the GTP hydrolysis stage on the ribosome. This chain is Elongation factor Ts, mitochondrial, found in Leishmania infantum.